A 266-amino-acid polypeptide reads, in one-letter code: Ribosomal RNA small subunit methyltransferase A (266 aa).

Residues Asn11, Leu13, Gly37, Glu57, Asp85, and Asn104 each contribute to the S-adenosyl-L-methionine site.

This sequence belongs to the class I-like SAM-binding methyltransferase superfamily. rRNA adenine N(6)-methyltransferase family. RsmA subfamily.

Its subcellular location is the cytoplasm. It catalyses the reaction adenosine(1518)/adenosine(1519) in 16S rRNA + 4 S-adenosyl-L-methionine = N(6)-dimethyladenosine(1518)/N(6)-dimethyladenosine(1519) in 16S rRNA + 4 S-adenosyl-L-homocysteine + 4 H(+). Its function is as follows. Specifically dimethylates two adjacent adenosines (A1518 and A1519) in the loop of a conserved hairpin near the 3'-end of 16S rRNA in the 30S particle. May play a critical role in biogenesis of 30S subunits. The sequence is that of Ribosomal RNA small subunit methyltransferase A from Campylobacter jejuni (strain RM1221).